Reading from the N-terminus, the 479-residue chain is Ribulose bisphosphate carboxylase large chain (479 aa).

The propeptide occupies 1–2; it reads MS. Proline 3 bears the N-acetylproline mark. Substrate is bound by residues threonine 65, asparagine 123, 173-177, and 201-204; these read TIKPK and KDDE. Lysine 175 serves as the catalytic Proton acceptor. 3 residues coordinate Mg(2+): lysine 201, aspartate 203, and glutamate 204. The residue at position 201 (lysine 201) is an N6-carboxylysine. Serine 208 carries the post-translational modification Phosphoserine. The active-site Proton acceptor is histidine 294. Substrate contacts are provided by residues 294 to 295 and histidine 327; that span reads HR. Threonine 330 is subject to Phosphothreonine. Substrate contacts are provided by residues lysine 334 and 379–381; that span reads SGG.

It belongs to the RuBisCO large chain family. Type I subfamily. In terms of assembly, heterohexadecamer of 8 large chains and 8 small chains; disulfide-linked. The disulfide link is formed within the large subunit homodimers. Interacts with RBCX1 and RBCX1. An intermediate complex made of eight RbcL subunits interacts with the chaperone BSD2. Mg(2+) serves as cofactor. In terms of processing, the disulfide bond which can form in the large chain dimeric partners within the hexadecamer appears to be associated with oxidative stress and protein turnover.

It localises to the plastid. The protein resides in the chloroplast. The catalysed reaction is 2 (2R)-3-phosphoglycerate + 2 H(+) = D-ribulose 1,5-bisphosphate + CO2 + H2O. It carries out the reaction D-ribulose 1,5-bisphosphate + O2 = 2-phosphoglycolate + (2R)-3-phosphoglycerate + 2 H(+). Its function is as follows. RuBisCO catalyzes two reactions: the carboxylation of D-ribulose 1,5-bisphosphate, the primary event in carbon dioxide fixation, as well as the oxidative fragmentation of the pentose substrate in the photorespiration process. Both reactions occur simultaneously and in competition at the same active site. Binds to abscisic acid (ABA). This is Ribulose bisphosphate carboxylase large chain from Arabidopsis thaliana (Mouse-ear cress).